Consider the following 183-residue polypeptide: ATP synthase subunit delta (183 aa).

It belongs to the ATPase delta chain family. In terms of assembly, F-type ATPases have 2 components, F(1) - the catalytic core - and F(0) - the membrane proton channel. F(1) has five subunits: alpha(3), beta(3), gamma(1), delta(1), epsilon(1). F(0) has three main subunits: a(1), b(2) and c(10-14). The alpha and beta chains form an alternating ring which encloses part of the gamma chain. F(1) is attached to F(0) by a central stalk formed by the gamma and epsilon chains, while a peripheral stalk is formed by the delta and b chains.

It is found in the cell inner membrane. F(1)F(0) ATP synthase produces ATP from ADP in the presence of a proton or sodium gradient. F-type ATPases consist of two structural domains, F(1) containing the extramembraneous catalytic core and F(0) containing the membrane proton channel, linked together by a central stalk and a peripheral stalk. During catalysis, ATP synthesis in the catalytic domain of F(1) is coupled via a rotary mechanism of the central stalk subunits to proton translocation. In terms of biological role, this protein is part of the stalk that links CF(0) to CF(1). It either transmits conformational changes from CF(0) to CF(1) or is implicated in proton conduction. In Nitratidesulfovibrio vulgaris (strain DSM 19637 / Miyazaki F) (Desulfovibrio vulgaris), this protein is ATP synthase subunit delta.